The following is a 462-amino-acid chain: B3 domain-containing protein REM8 (462 aa).

DNA-binding regions (TF-B3) lie at residues N11–S103, C148–R243, and F249–I346. Residues F351 to V419 are disordered. Residues E369 to P397 are compositionally biased toward basic and acidic residues. Positions R399–S418 are enriched in polar residues.

It localises to the nucleus. This Arabidopsis thaliana (Mouse-ear cress) protein is B3 domain-containing protein REM8 (REM8).